Reading from the N-terminus, the 418-residue chain is Serine hydroxymethyltransferase (418 aa).

(6S)-5,6,7,8-tetrahydrofolate contacts are provided by residues Leu-121 and 125–127 (GHL). Lys-230 carries the post-translational modification N6-(pyridoxal phosphate)lysine. 355-357 (SPF) is a (6S)-5,6,7,8-tetrahydrofolate binding site.

This sequence belongs to the SHMT family. As to quaternary structure, homodimer. Pyridoxal 5'-phosphate serves as cofactor.

Its subcellular location is the cytoplasm. The catalysed reaction is (6R)-5,10-methylene-5,6,7,8-tetrahydrofolate + glycine + H2O = (6S)-5,6,7,8-tetrahydrofolate + L-serine. It functions in the pathway one-carbon metabolism; tetrahydrofolate interconversion. It participates in amino-acid biosynthesis; glycine biosynthesis; glycine from L-serine: step 1/1. Functionally, catalyzes the reversible interconversion of serine and glycine with tetrahydrofolate (THF) serving as the one-carbon carrier. This reaction serves as the major source of one-carbon groups required for the biosynthesis of purines, thymidylate, methionine, and other important biomolecules. Also exhibits THF-independent aldolase activity toward beta-hydroxyamino acids, producing glycine and aldehydes, via a retro-aldol mechanism. The chain is Serine hydroxymethyltransferase from Streptococcus pyogenes serotype M1.